The sequence spans 218 residues: MEPFIKHKGLVAPLDRANVDTDAIIPKQFLKSIRRTGFGPFLFDEWRYLDEGQPDMDCSQRPVNPDFVLNQARYQGASILLTRRNFGCGSSREHAPWALKDFGFRAIIAPSFADIFYNNCFKNGLLPLVLTEAQVDRLFKEVEAAPGYELEIDLPEQQVRTPAGEAFEFEIDGFRKHALLEGLDEIGLTLQHAEDIRAYEARRREQAPWLFTDLEEGR.

The protein belongs to the LeuD family. LeuD type 1 subfamily. As to quaternary structure, heterodimer of LeuC and LeuD.

It carries out the reaction (2R,3S)-3-isopropylmalate = (2S)-2-isopropylmalate. It functions in the pathway amino-acid biosynthesis; L-leucine biosynthesis; L-leucine from 3-methyl-2-oxobutanoate: step 2/4. Functionally, catalyzes the isomerization between 2-isopropylmalate and 3-isopropylmalate, via the formation of 2-isopropylmaleate. This chain is 3-isopropylmalate dehydratase small subunit, found in Alkalilimnicola ehrlichii (strain ATCC BAA-1101 / DSM 17681 / MLHE-1).